A 73-amino-acid polypeptide reads, in one-letter code: Disintegrin trigramin-gamma (73 aa).

One can recognise a Disintegrin domain in the interval 1 to 73 (EAGEDCDCGS…AGCPRNPLHA (73 aa)). 6 disulfide bridges follow: C6–C21, C8–C16, C15–C38, C29–C35, C34–C59, and C47–C66. Positions 51-53 (RGD) match the Cell attachment site motif.

The protein belongs to the venom metalloproteinase (M12B) family. P-II subfamily. P-IIa sub-subfamily. As to quaternary structure, monomer (disintegrin). Expressed by the venom gland.

The protein localises to the secreted. Inhibits fibrinogen interaction with platelets. Acts by binding to alpha-IIb/beta-3 (ITGA2B/ITGB3) on the platelet surface and inhibits aggregation induced by ADP, thrombin, platelet-activating factor and collagen. The protein is Disintegrin trigramin-gamma of Craspedocephalus gramineus (Bamboo pit viper).